An 888-amino-acid polypeptide reads, in one-letter code: Molybdenum cofactor sulfurase (888 aa).

A Phosphoserine modification is found at serine 34. Lysine 264 is modified (N6-(pyridoxal phosphate)lysine). Cysteine 424 is a catalytic residue. Residues serine 528 and serine 530 each carry the phosphoserine modification. In terms of domain architecture, MOSC spans 706 to 867 (KQSSNSQRNA…LSVGSQVLPV (162 aa)).

Belongs to the class-V pyridoxal-phosphate-dependent aminotransferase family. MOCOS subfamily. Pyridoxal 5'-phosphate is required as a cofactor.

It catalyses the reaction Mo-molybdopterin + L-cysteine + AH2 = thio-Mo-molybdopterin + L-alanine + A + H2O. The protein operates within cofactor biosynthesis; molybdopterin biosynthesis. Functionally, sulfurates the molybdenum cofactor. Sulfation of molybdenum is essential for xanthine dehydrogenase (XDH) and aldehyde oxidase (ADO) enzymes in which molybdenum cofactor is liganded by 1 oxygen and 1 sulfur atom in active form. In vitro, the C-terminal domain is able to reduce N-hydroxylated prodrugs, such as benzamidoxime. The sequence is that of Molybdenum cofactor sulfurase from Homo sapiens (Human).